The chain runs to 59 residues: Large ribosomal subunit protein uL30 (59 aa).

Belongs to the universal ribosomal protein uL30 family. As to quaternary structure, part of the 50S ribosomal subunit.

This is Large ribosomal subunit protein uL30 from Enterobacter sp. (strain 638).